The primary structure comprises 278 residues: Gap junction delta-3 protein (278 aa).

Residues 1-24 (MGEWAFLGSLLDAVQLQSPLVGRL) lie on the Cytoplasmic side of the membrane. A helical transmembrane segment spans residues 25-45 (WLVIMLIFRILVLATVGGAVF). The Extracellular portion of the chain corresponds to 46–76 (EDEQEEFVCNTLQPGCRQTCYDRAFPVSHYR). The helical transmembrane segment at 77–97 (FWLFHILLLSAPPVLFVIYSM) threads the bilayer. Topologically, residues 98–136 (HQASKEAGGAQLAPPCARGRAEAPCSPCALRARRARRCY) are cytoplasmic. Residues 137 to 157 (LLSVALRLLAELAFLGGQALL) traverse the membrane as a helical segment. The Extracellular segment spans residues 158-188 (YGFRVDPHYACAGPPCPHTVDCFVSRPTEKT). Residues 189–209 (VFVVFYFAVGLLSALLSVAEL) traverse the membrane as a helical segment. The Cytoplasmic portion of the chain corresponds to 210–278 (GHLLWKGRQR…LATVRQDLAI (69 aa)). Residues 223 to 278 (LPPPPPSPSLPSQRGDPDPFGPPAYAHRSPAGDSEGEGGSGHSKASLATVRQDLAI) form a disordered region.

It belongs to the connexin family. Delta-type subfamily. As to quaternary structure, a connexon is composed of a hexamer of connexins.

The protein localises to the cell membrane. Its subcellular location is the cell junction. It localises to the gap junction. In terms of biological role, one gap junction consists of a cluster of closely packed pairs of transmembrane channels, the connexons, through which materials of low MW diffuse from one cell to a neighboring cell. In Mus musculus (Mouse), this protein is Gap junction delta-3 protein (Gjd3).